The chain runs to 629 residues: tRNA uridine 5-carboxymethylaminomethyl modification enzyme MnmG (629 aa).

FAD is bound at residue 13-18 (GGGHAG). 273 to 287 (GPRYCPSIEDKVVRF) is an NAD(+) binding site.

Belongs to the MnmG family. In terms of assembly, homodimer. Heterotetramer of two MnmE and two MnmG subunits. It depends on FAD as a cofactor.

It localises to the cytoplasm. Functionally, NAD-binding protein involved in the addition of a carboxymethylaminomethyl (cmnm) group at the wobble position (U34) of certain tRNAs, forming tRNA-cmnm(5)s(2)U34. The chain is tRNA uridine 5-carboxymethylaminomethyl modification enzyme MnmG from Alkalilimnicola ehrlichii (strain ATCC BAA-1101 / DSM 17681 / MLHE-1).